Here is a 447-residue protein sequence, read N- to C-terminus: GTPase Der (447 aa).

EngA-type G domains are found at residues 3–167 (PVIA…FAER) and 181–354 (TRIA…AAAM). Residues 9–16 (GRPNVGKS), 56–60 (DTGGF), 119–122 (NKAE), 187–194 (GRPNVGKS), 234–238 (DTAGL), and 299–302 (NKWD) contribute to the GTP site. Residues 355–439 (VKLPTPKLTR…PLRIEFRTNK (85 aa)) form the KH-like domain.

It belongs to the TRAFAC class TrmE-Era-EngA-EngB-Septin-like GTPase superfamily. EngA (Der) GTPase family. As to quaternary structure, associates with the 50S ribosomal subunit.

GTPase that plays an essential role in the late steps of ribosome biogenesis. The protein is GTPase Der of Ralstonia nicotianae (strain ATCC BAA-1114 / GMI1000) (Ralstonia solanacearum).